Reading from the N-terminus, the 494-residue chain is NAD(+) hydrolase ThsA (494 aa).

One can recognise a Deacetylase sirtuin-type domain in the interval 11–295 (ATDKEVLIKE…TILQRYCRSK (285 aa)). 3 residues coordinate NAD(+): Ala-30, Asp-119, and His-157. The active-site Proton acceptor is His-157. An SLOG (STALD) domain, binds 3'cADPR region spans residues 296 to 494 (ILISGSAVEY…KIITALRAGR (199 aa)). 3'cADPR contacts are provided by Gly-300, Ser-301, Leu-339, Phe-370, Arg-388, Lys-405, Gly-416, and Glu-420.

Belongs to the soluble Thoeris ThsA family. As to quaternary structure, homotetramer.

The protein resides in the cytoplasm. The enzyme catalyses NAD(+) + H2O = ADP-D-ribose + nicotinamide + H(+). Its activity is regulated as follows. Probably activated by a signal molecule generated by endogenous ThsB1 and/or ThsB2. Can also be activated by the signal generated by ThsB of B.cereus. The activating molecule might be 3' cyclic ADP-D-ribose (3'cADPR). Its function is as follows. Probable NAD(+) hydrolyzing component (NADase) of the Thoeris antiviral defense system, composed of ThsA, TIR1 (thsB1) and TIR2 (thsB2). Activated by a signal molecule generated by endogenous TIR1, TIR2 or ThsB from B.cereus. After activation it binds and hydrolyzes NAD(+), leading to cell death and inhibition of phage replication. Expression of Thoeris in B.subtilis (strain BEST7003) confers resistance to phages phi29, phi3T, SPBeta, SBSphi11, SBSphi13, SBSphiJ, SPO1 and SPR but not SBSphiC. The TIR paralogs confer overlapping resistance to different phages. The polypeptide is NAD(+) hydrolase ThsA (Cytobacillus dafuensis (Bacillus dafuensis)).